Here is a 268-residue protein sequence, read N- to C-terminus: MAFSTIFILLICGICTNMVSAIFGIGGGVLMVPILRTLFPELPIQVISATSLTIVMCTALINLLFFHKQKIKIDYINMILWSIAMVIGVQIGFELSFYFSTAIISLIFTVSLSALAIKTFLNRSRIQIEVFNMSPIERAKGSISFCGGGLIAGITGIGGGSILAPLVGQLKGVKTQQIAVYTNYMMIIGGIGNLYGYLTRAFLYDASLSGQLGLNFLVVGVVTLGSFEMSFFSMKLRGLMNPVLTRKLLAIILFCIAAYMCILEFVFH.

8 consecutive transmembrane segments (helical) span residues 6 to 26, 46 to 66, 79 to 99, 101 to 121, 147 to 167, 178 to 198, 212 to 232, and 248 to 268; these read IFILLICGICTNMVSAIFGIG, VISATSLTIVMCTALINLLFF, ILWSIAMVIGVQIGFELSFYF, TAIISLIFTVSLSALAIKTFL, GGGLIAGITGIGGGSILAPLV, IAVYTNYMMIIGGIGNLYGYL, LGLNFLVVGVVTLGSFEMSFF, and LLAIILFCIAAYMCILEFVFH.

The protein belongs to the 4-toluene sulfonate uptake permease (TSUP) (TC 2.A.102) family.

Its subcellular location is the cell membrane. In Haemophilus influenzae (strain ATCC 51907 / DSM 11121 / KW20 / Rd), this protein is Probable membrane transporter protein HI_0806.